We begin with the raw amino-acid sequence, 86 residues long: Large ribosomal subunit protein bL31 (86 aa).

The disordered stretch occupies residues 66–86 (GMGSANSATSKEQKADKDSQK). The segment covering 76–86 (KEQKADKDSQK) has biased composition (basic and acidic residues).

The protein belongs to the bacterial ribosomal protein bL31 family. Type A subfamily. As to quaternary structure, part of the 50S ribosomal subunit.

Binds the 23S rRNA. In Prochlorococcus marinus (strain MIT 9215), this protein is Large ribosomal subunit protein bL31.